The following is a 91-amino-acid chain: Probable Fe(2+)-trafficking protein (91 aa).

Belongs to the Fe(2+)-trafficking protein family.

In terms of biological role, could be a mediator in iron transactions between iron acquisition and iron-requiring processes, such as synthesis and/or repair of Fe-S clusters in biosynthetic enzymes. This chain is Probable Fe(2+)-trafficking protein, found in Cupriavidus metallidurans (strain ATCC 43123 / DSM 2839 / NBRC 102507 / CH34) (Ralstonia metallidurans).